Reading from the N-terminus, the 156-residue chain is Endoribonuclease YbeY (156 aa).

Zn(2+)-binding residues include H122, H126, and H132.

This sequence belongs to the endoribonuclease YbeY family. Requires Zn(2+) as cofactor.

The protein localises to the cytoplasm. In terms of biological role, single strand-specific metallo-endoribonuclease involved in late-stage 70S ribosome quality control and in maturation of the 3' terminus of the 16S rRNA. In Geobacillus thermodenitrificans (strain NG80-2), this protein is Endoribonuclease YbeY.